The following is a 262-amino-acid chain: Phosphonates import ATP-binding protein PhnC (262 aa).

Residues 5–253 (IRVEKLAKTF…RFDHLYRSIN (249 aa)) form the ABC transporter domain. 37–44 (GPSGSGKS) lines the ATP pocket.

It belongs to the ABC transporter superfamily. Phosphonates importer (TC 3.A.1.9.1) family. The complex is composed of two ATP-binding proteins (PhnC), two transmembrane proteins (PhnE) and a solute-binding protein (PhnD).

The protein resides in the cell inner membrane. The enzyme catalyses phosphonate(out) + ATP + H2O = phosphonate(in) + ADP + phosphate + H(+). Its function is as follows. Part of the ABC transporter complex PhnCDE involved in phosphonates, phosphate esters, phosphite and phosphate import. Responsible for energy coupling to the transport system. The sequence is that of Phosphonates import ATP-binding protein PhnC from Escherichia coli (strain K12).